The primary structure comprises 183 residues: MVTQYIPLKEKYEKEVVPKLMKEFNYRNINQVPRIEKIVINMGIGEGSRNADLLNKHLKELAAITGQKPVITKAKKSISNFKIRKGMNVGLKVTLRGLRMWNFLYKIANIVLPKVRDFRGLNPNSFDGHGNYSFGLTEQFVFPEITPDQSPKTQGMDIVIVTTAKTDAEAFKLLEFLGFPFKR.

Belongs to the universal ribosomal protein uL5 family. In terms of assembly, part of the 50S ribosomal subunit; part of the 5S rRNA/L5/L18/L25 subcomplex. Contacts the 5S rRNA and the P site tRNA. Forms a bridge to the 30S subunit in the 70S ribosome.

Functionally, this is one of the proteins that bind and probably mediate the attachment of the 5S RNA into the large ribosomal subunit, where it forms part of the central protuberance. In the 70S ribosome it contacts protein S13 of the 30S subunit (bridge B1b), connecting the 2 subunits; this bridge is implicated in subunit movement. Contacts the P site tRNA; the 5S rRNA and some of its associated proteins might help stabilize positioning of ribosome-bound tRNAs. This is Large ribosomal subunit protein uL5 from Pseudothermotoga lettingae (strain ATCC BAA-301 / DSM 14385 / NBRC 107922 / TMO) (Thermotoga lettingae).